Consider the following 234-residue polypeptide: Synaptogyrin-4 (234 aa).

The 152-residue stretch at 18–169 (FLKRPKAITR…QAYLAFQELR (152 aa)) folds into the MARVEL domain. 4 helical membrane-spanning segments follow: residues 25-45 (ITRI…LTDG), 66-86 (CSIA…FLAL), 104-124 (LLDL…FCFL), and 145-165 (AAIT…YLAF). The tract at residues 191 to 226 (SPPSAASPVNTPTTGPHGPSYASSSLSPYLSTPKAP) is disordered. The span at 209-221 (PSYASSSLSPYLS) shows a compositional bias: low complexity.

The protein belongs to the synaptogyrin family.

Its subcellular location is the membrane. This Bos taurus (Bovine) protein is Synaptogyrin-4 (SYNGR4).